The chain runs to 970 residues: Insulin-degrading enzyme-like 1, peroxisomal (970 aa).

Residue His69 participates in Zn(2+) binding. The Proton acceptor role is filled by Glu72. His73 lines the Zn(2+) pocket. Glu143 is a catalytic residue. Position 150 (Glu150) interacts with Zn(2+).

The protein belongs to the peptidase M16 family. Zn(2+) is required as a cofactor.

It is found in the peroxisome. Functionally, peptidase that might be involved in pathogen or wound response. Not required for peroxisome biogenesis, indole-3-butyric acid (IBA) metabolism, fatty acid beta-oxidation or degradation of glyoxylate cycle enzymes during seedling development. In Arabidopsis thaliana (Mouse-ear cress), this protein is Insulin-degrading enzyme-like 1, peroxisomal (PXM16).